The following is a 343-amino-acid chain: Homeobox-leucine zipper protein HOX16 (343 aa).

Positions 74 to 133 form a DNA-binding region, homeobox; that stretch reads LPEKKRRLTPEQVHLLERSFEEENKLEPERKTELARKLGLQPRQVAVWFQNRRARWKTKQ. The tract at residues 132–176 is leucine-zipper; that stretch reads KQLERDFDRLKASFDALRADHDALLQDNHRLHSQVMSLTEKLQEK. Residues 218-239 are disordered; the sequence is FEEQQEQQVKAEDRLSTGSGGS.

It belongs to the HD-ZIP homeobox family. Class I subfamily. Expressed in seedlings, stems, leaf sheaths and blades and panicles.

It is found in the nucleus. Probable transcription factor. This Oryza sativa subsp. japonica (Rice) protein is Homeobox-leucine zipper protein HOX16 (HOX16).